Consider the following 213-residue polypeptide: U1 small nuclear ribonucleoprotein C (213 aa).

The segment at 4–36 (YYCDYCDTYLTHDSPSVRKQHNAGYKHKANVRS) adopts a Matrin-type zinc-finger fold. Positions 143–166 (APSMPMPPLNSLPRPPTMNVPPAV) are enriched in pro residues. Residues 143–213 (APSMPMPPLN…INAQGPEANH (71 aa)) form a disordered region. Positions 167–180 (PGSTSTPTSGGAPS) are enriched in low complexity.

Belongs to the U1 small nuclear ribonucleoprotein C family. U1 snRNP is composed of the 7 core Sm proteins B/B', D1, D2, D3, E, F and G that assemble in a heptameric protein ring on the Sm site of the small nuclear RNA to form the core snRNP, and at least 3 U1 snRNP-specific proteins U1-70K, U1-A and U1-C. U1-C interacts with U1 snRNA and the 5' splice-site region of the pre-mRNA.

It localises to the nucleus. Its function is as follows. Component of the spliceosomal U1 snRNP, which is essential for recognition of the pre-mRNA 5' splice-site and the subsequent assembly of the spliceosome. U1-C is directly involved in initial 5' splice-site recognition for both constitutive and regulated alternative splicing. The interaction with the 5' splice-site seems to precede base-pairing between the pre-mRNA and the U1 snRNA. Stimulates commitment or early (E) complex formation by stabilizing the base pairing of the 5' end of the U1 snRNA and the 5' splice-site region. The sequence is that of U1 small nuclear ribonucleoprotein C from Vitis vinifera (Grape).